A 274-amino-acid chain; its full sequence is Thymidylate synthase (274 aa).

R21 is a dUMP binding site. H51 is a binding site for (6R)-5,10-methylene-5,6,7,8-tetrahydrofolate. 123–124 (RR) contacts dUMP. Catalysis depends on C156, which acts as the Nucleophile. DUMP is bound by residues 176–179 (RSAD), N187, and 217–219 (HIY). D179 provides a ligand contact to (6R)-5,10-methylene-5,6,7,8-tetrahydrofolate. S273 is a binding site for (6R)-5,10-methylene-5,6,7,8-tetrahydrofolate.

Belongs to the thymidylate synthase family. Bacterial-type ThyA subfamily. Homodimer.

The protein localises to the cytoplasm. It carries out the reaction dUMP + (6R)-5,10-methylene-5,6,7,8-tetrahydrofolate = 7,8-dihydrofolate + dTMP. It functions in the pathway pyrimidine metabolism; dTTP biosynthesis. Its function is as follows. Catalyzes the reductive methylation of 2'-deoxyuridine-5'-monophosphate (dUMP) to 2'-deoxythymidine-5'-monophosphate (dTMP) while utilizing 5,10-methylenetetrahydrofolate (mTHF) as the methyl donor and reductant in the reaction, yielding dihydrofolate (DHF) as a by-product. This enzymatic reaction provides an intracellular de novo source of dTMP, an essential precursor for DNA biosynthesis. This Francisella tularensis subsp. novicida (strain U112) protein is Thymidylate synthase.